The primary structure comprises 374 residues: Beta-lytic metalloendopeptidase (374 aa).

The N-terminal stretch at 1 to 24 (MKKISKAGLGLALVCALATIGGNA) is a signal peptide. A propeptide spanning residues 25-195 (ARRATAQRRG…RQGRPGRAAV (171 aa)) is cleaved from the precursor. Residues 128 to 187 (PTRQGAGDAGPRQSAAGAVRAFRRQRAGGRAARRRRVPAGLRPPVQRTAPGQGGFGPLRQ) are disordered. Residues 148-164 (AFRRQRAGGRAARRRRV) show a composition bias toward basic residues. Cysteine 261 and cysteine 307 are joined by a disulfide. Zn(2+) contacts are provided by histidine 316 and histidine 318. A disulfide bridge connects residues cysteine 351 and cysteine 364.

Belongs to the peptidase M23A family. Zn(2+) serves as cofactor.

The protein resides in the secreted. It carries out the reaction Cleavage of N-acetylmuramoyl-|-Ala, and of the insulin B chain at 23-Gly-|-Phe-24 &gt; 18-Val-|-Cys(SO3H).. The protein is Beta-lytic metalloendopeptidase of Achromobacter lyticus.